A 203-amino-acid chain; its full sequence is Small ribosomal subunit protein uS4 (203 aa).

The region spanning 93 to 155 (RRLDSIVYRL…SKNLQQIRDA (63 aa)) is the S4 RNA-binding domain.

Belongs to the universal ribosomal protein uS4 family. Part of the 30S ribosomal subunit. Contacts protein S5. The interaction surface between S4 and S5 is involved in control of translational fidelity.

One of the primary rRNA binding proteins, it binds directly to 16S rRNA where it nucleates assembly of the body of the 30S subunit. In terms of biological role, with S5 and S12 plays an important role in translational accuracy. This chain is Small ribosomal subunit protein uS4, found in Lactobacillus acidophilus (strain ATCC 700396 / NCK56 / N2 / NCFM).